The following is a 411-amino-acid chain: Adenylosuccinate synthetase (411 aa).

GTP-binding positions include 11–17 (GDEGKGK) and 39–41 (GHT). The active-site Proton acceptor is Asp-12. Mg(2+) is bound by residues Asp-12 and Gly-39. IMP contacts are provided by residues 12 to 15 (DEGK), 37 to 40 (NAGH), Thr-121, Arg-135, Gln-215, Thr-230, and Arg-294. The Proton donor role is filled by His-40. A substrate-binding site is contributed by 290–296 (TTTKRPR). GTP contacts are provided by residues Arg-296, 322–324 (KLD), and 400–402 (STS).

It belongs to the adenylosuccinate synthetase family. Homodimer. The cofactor is Mg(2+).

Its subcellular location is the cytoplasm. It carries out the reaction IMP + L-aspartate + GTP = N(6)-(1,2-dicarboxyethyl)-AMP + GDP + phosphate + 2 H(+). It functions in the pathway purine metabolism; AMP biosynthesis via de novo pathway; AMP from IMP: step 1/2. Functionally, plays an important role in the de novo pathway of purine nucleotide biosynthesis. Catalyzes the first committed step in the biosynthesis of AMP from IMP. The sequence is that of Adenylosuccinate synthetase from Helicobacter pylori (strain ATCC 700392 / 26695) (Campylobacter pylori).